The sequence spans 279 residues: Cyanocobalamin reductase / alkylcobalamin dealkylase (279 aa).

Residues Asp-104, 115-118 (ILAQ), 129-131 (YYQ), Cys-149, and Ile-160 contribute to the substrate site. Positions 239–279 (PSEHPSTTSELPLSLLTKPQNSRRARSWLSPSVSPPVSPGP) are disordered. Low complexity predominate over residues 243–257 (PSTTSELPLSLLTKP). Phosphoserine is present on residues Ser-247, Ser-272, and Ser-276.

The protein belongs to the MMACHC family. As to quaternary structure, monomer in the absence of bound substrate. Homodimer; dimerization is triggered by binding to FMN or adenosylcobalamin. Interacts with LMBRD1 and ABCD4; the interaction ensures the transport of cobalamin from the lysosome to the cytoplasm. Forms a multiprotein complex with MMADHC, MTR and MTRR; the interaction with MTR could modulate MMACHC-dependent processing of cobalamin. Heterodimer with MMADHC; the interaction might play a role in the regulation of the balance between AdoCbl and MeCbl synthesis. FAD is required as a cofactor. The cofactor is FMN. In terms of tissue distribution, detected in liver and kidney (at protein level). Detected in embryos.

It localises to the cytoplasm. The protein localises to the cytosol. The enzyme catalyses 2 cob(II)alamin-[cyanocobalamin reductase] + 2 hydrogen cyanide + NADP(+) = 2 cyanocob(III)alamin + 2 apo-[cyanocobalamin reductase] + NADPH + H(+). It catalyses the reaction apo-[alkylcobalamin reductase] + an R-cob(III)alamin + glutathione = cob(I)alamin-[alkylcobalamin reductase] + an S-substituted glutathione + H(+). It carries out the reaction apo-[alkylcobalamin reductase] + methylcob(III)alamin + glutathione = S-methyl glutathione + cob(I)alamin-[alkylcobalamin reductase] + H(+). The catalysed reaction is apo-[alkylcobalamin reductase] + adenosylcob(III)alamin + glutathione = S-adenosylglutathione + cob(I)alamin-[alkylcobalamin reductase] + H(+). Cobalamin (vitamin B12) cytosolic chaperone that catalyzes the reductive decyanation of cyanocob(III)alamin (cyanocobalamin, CNCbl) to yield cob(II)alamin and cyanide, using FAD or FMN as cofactors and NADPH as cosubstrate. Cyanocobalamin constitutes the inactive form of vitamin B12 introduced from the diet, and is converted into the active cofactors methylcobalamin (MeCbl) involved in methionine biosynthesis, and 5'-deoxyadenosylcobalamin (AdoCbl) involved in the TCA cycle. Forms a complex with the lysosomal transporter ABCD4 and its chaperone LMBRD1, to transport cobalamin across the lysosomal membrane into the cytosol. The processing of cobalamin in the cytosol occurs in a multiprotein complex composed of at least MMACHC, MMADHC, MTRR (methionine synthase reductase) and MTR (methionine synthase) which may contribute to shuttle safely and efficiently cobalamin towards MTR in order to produce methionine. Also acts as a glutathione transferase by catalyzing the dealkylation of the alkylcob(III)alamins MeCbl and AdoCbl, using the thiolate of glutathione for nucleophilic displacement to generate cob(I)alamin and the corresponding glutathione thioether. The conversion of incoming MeCbl or AdoCbl into a common intermediate cob(I)alamin is necessary to meet the cellular needs for both cofactors. Cysteine and homocysteine cannot substitute for glutathione in this reaction. In Mus musculus (Mouse), this protein is Cyanocobalamin reductase / alkylcobalamin dealkylase.